A 284-amino-acid polypeptide reads, in one-letter code: Bifunctional protein FolD (284 aa).

NADP(+)-binding positions include 165 to 167 (GRS) and Ser190.

This sequence belongs to the tetrahydrofolate dehydrogenase/cyclohydrolase family. Homodimer.

It catalyses the reaction (6R)-5,10-methylene-5,6,7,8-tetrahydrofolate + NADP(+) = (6R)-5,10-methenyltetrahydrofolate + NADPH. The catalysed reaction is (6R)-5,10-methenyltetrahydrofolate + H2O = (6R)-10-formyltetrahydrofolate + H(+). It participates in one-carbon metabolism; tetrahydrofolate interconversion. Catalyzes the oxidation of 5,10-methylenetetrahydrofolate to 5,10-methenyltetrahydrofolate and then the hydrolysis of 5,10-methenyltetrahydrofolate to 10-formyltetrahydrofolate. In Streptococcus agalactiae serotype Ia (strain ATCC 27591 / A909 / CDC SS700), this protein is Bifunctional protein FolD.